Here is a 714-residue protein sequence, read N- to C-terminus: Structure-specific endonuclease subunit SLX4 1 (714 aa).

2 stretches are compositionally biased toward basic and acidic residues: residues 1–14 (MSPEGEESHAEDNL) and 24–34 (IHEETLAEESH). 2 disordered regions span residues 1–116 (MSPE…QGSI) and 337–369 (DSSGPVNDKQPSVASETVESDSTPIVSPVKTPQ). A compositionally biased stretch (low complexity) spans 36 to 46 (QSIQRSISRLS). The segment covering 79-92 (KTKKRKLKVSKPRK) has biased composition (basic residues).

This sequence belongs to the SLX4 family. As to quaternary structure, forms a heterodimer with SLX1. Post-translationally, phosphorylated in response to DNA damage.

The protein localises to the nucleus. Its function is as follows. Regulatory subunit of the SLX1-SLX4 structure-specific endonuclease that resolves DNA secondary structures generated during DNA repair and recombination. Has endonuclease activity towards branched DNA substrates, introducing single-strand cuts in duplex DNA close to junctions with ss-DNA. This chain is Structure-specific endonuclease subunit SLX4 1, found in Candida tropicalis (strain ATCC MYA-3404 / T1) (Yeast).